The primary structure comprises 155 residues: uncharacterized protein (155 aa).

Positions 4 to 65 constitute an HTH asnC-type domain; sequence IDEIDEVIVR…VVDPSFFGEF (62 aa). The H-T-H motif DNA-binding region spans 23–42; it reads LTELGRKVGLTASAVKNRIE.

This is an uncharacterized protein from Pyrococcus horikoshii (strain ATCC 700860 / DSM 12428 / JCM 9974 / NBRC 100139 / OT-3).